The chain runs to 300 residues: 3-hydroxy-3-isohexenylglutaryl-CoA/hydroxy-methylglutaryl-CoA lyase (300 aa).

The Pyruvate carboxyltransferase domain occupies 7 to 274 (VRLVEVGPRD…HTGVDMHALV (268 aa)). Arg-15 is a binding site for substrate. Residues Asp-16, His-207, and His-209 each coordinate a divalent metal cation. Cys-240 is an active-site residue. Residue Asn-249 participates in a divalent metal cation binding.

Belongs to the HMG-CoA lyase family. As to quaternary structure, homodimer. The cofactor is Mg(2+). Mn(2+) is required as a cofactor.

The enzyme catalyses 3-hydroxy-3-(4-methylpent-3-en-1-yl)glutaryl-CoA = 7-methyl-3-oxooct-6-enoyl-CoA + acetate. It carries out the reaction (3S)-3-hydroxy-3-methylglutaryl-CoA = acetoacetate + acetyl-CoA. It functions in the pathway metabolic intermediate metabolism; (S)-3-hydroxy-3-methylglutaryl-CoA degradation; acetoacetate from (S)-3-hydroxy-3-methylglutaryl-CoA: step 1/1. Involved in the L-leucine, isovalerate and acyclic monoterpene catabolism. Catalyzes the cleavage of 3-hydroxy-3-methylglutaryl-CoA (HMG-CoA) to yield acetyl-CoA and acetoacetate. It can also catalyze the cleavage of 3-hydroxy-3-isohexenylglutaryl-CoA (HIHG_CoA) to yield 7-methyl-3-oxooct-6-enoyl-CoA and acetate. This chain is 3-hydroxy-3-isohexenylglutaryl-CoA/hydroxy-methylglutaryl-CoA lyase, found in Pseudomonas aeruginosa (strain ATCC 15692 / DSM 22644 / CIP 104116 / JCM 14847 / LMG 12228 / 1C / PRS 101 / PAO1).